Reading from the N-terminus, the 143-residue chain is Large ribosomal subunit protein uL11 (143 aa).

Belongs to the universal ribosomal protein uL11 family. In terms of assembly, part of the ribosomal stalk of the 50S ribosomal subunit. Interacts with L10 and the large rRNA to form the base of the stalk. L10 forms an elongated spine to which L12 dimers bind in a sequential fashion forming a multimeric L10(L12)X complex. Post-translationally, one or more lysine residues are methylated.

Its function is as follows. Forms part of the ribosomal stalk which helps the ribosome interact with GTP-bound translation factors. The sequence is that of Large ribosomal subunit protein uL11 from Acidovorax ebreus (strain TPSY) (Diaphorobacter sp. (strain TPSY)).